Consider the following 92-residue polypeptide: MSRSLKKNPFVANNLLLKIHKLNTREEKEIIVTWSRASTIIPTMIGHTIAIHNGKEHLPVYVTDRMVGHKLGEFAPTLTFQGHARNDSKFRR.

This sequence belongs to the universal ribosomal protein uS19 family.

The protein resides in the plastid. It is found in the chloroplast. Its function is as follows. Protein S19 forms a complex with S13 that binds strongly to the 16S ribosomal RNA. The protein is Small ribosomal subunit protein uS19c of Amborella trichopoda.